A 241-amino-acid chain; its full sequence is Octanoyltransferase (241 aa).

The region spanning 38 to 227 (AGGPDTLLLL…AVCNALDGAL (190 aa)) is the BPL/LPL catalytic domain. Residues 85–92 (RGGKITWH), 157–159 (AIG), and 170–172 (GFA) each bind substrate. Catalysis depends on Cys188, which acts as the Acyl-thioester intermediate.

This sequence belongs to the LipB family.

Its subcellular location is the cytoplasm. It catalyses the reaction octanoyl-[ACP] + L-lysyl-[protein] = N(6)-octanoyl-L-lysyl-[protein] + holo-[ACP] + H(+). It functions in the pathway protein modification; protein lipoylation via endogenous pathway; protein N(6)-(lipoyl)lysine from octanoyl-[acyl-carrier-protein]: step 1/2. Catalyzes the transfer of endogenously produced octanoic acid from octanoyl-acyl-carrier-protein onto the lipoyl domains of lipoate-dependent enzymes. Lipoyl-ACP can also act as a substrate although octanoyl-ACP is likely to be the physiological substrate. The sequence is that of Octanoyltransferase from Mycobacterium ulcerans (strain Agy99).